Reading from the N-terminus, the 232-residue chain is Lipoprotein-releasing system ATP-binding protein LolD (232 aa).

An ABC transporter domain is found at 6 to 231 (ISCENLNKVY…KLTIKESQHV (226 aa)). Position 42 to 49 (42 to 49 (GSSGSGKS)) interacts with ATP.

This sequence belongs to the ABC transporter superfamily. Lipoprotein translocase (TC 3.A.1.125) family. As to quaternary structure, the complex is composed of two ATP-binding proteins (LolD) and two transmembrane proteins (LolC and LolE).

The protein localises to the cell inner membrane. Its function is as follows. Part of the ABC transporter complex LolCDE involved in the translocation of mature outer membrane-directed lipoproteins, from the inner membrane to the periplasmic chaperone, LolA. Responsible for the formation of the LolA-lipoprotein complex in an ATP-dependent manner. This chain is Lipoprotein-releasing system ATP-binding protein LolD, found in Pseudoalteromonas translucida (strain TAC 125).